The following is a 289-amino-acid chain: uncharacterized protein (289 aa).

Helical transmembrane passes span 4 to 24, 44 to 64, 68 to 88, 106 to 126, 138 to 158, 166 to 186, 196 to 216, 230 to 250, and 258 to 278; these read NLLAVLFALASALTIAWGTVV, LNALMTPMWWAGMSTAMLAYF, VALGFGTLLVVQPVLVLSLMF, IFWATLLTVAVGIMIVLGRPL, IPVLLVGVAVMGGMWLLAEYV, ILGLVTGALFGYVAVMSKAAV, GLILNWEGYGLILTALLGTIV, LPAMTIAEPIVAFSLGYLVLG, and WEWIAMGIALLVMIVSTIALS.

It is found in the cell membrane. This is an uncharacterized protein from Corynebacterium glutamicum (strain ATCC 13032 / DSM 20300 / JCM 1318 / BCRC 11384 / CCUG 27702 / LMG 3730 / NBRC 12168 / NCIMB 10025 / NRRL B-2784 / 534).